The sequence spans 279 residues: tRNA dimethylallyltransferase (279 aa).

ATP is bound at residue 10–17 (GPTASGKS). 12-17 (TASGKS) is a substrate binding site.

It belongs to the IPP transferase family. Monomer. Mg(2+) is required as a cofactor.

It carries out the reaction adenosine(37) in tRNA + dimethylallyl diphosphate = N(6)-dimethylallyladenosine(37) in tRNA + diphosphate. Functionally, catalyzes the transfer of a dimethylallyl group onto the adenine at position 37 in tRNAs that read codons beginning with uridine, leading to the formation of N6-(dimethylallyl)adenosine (i(6)A). The protein is tRNA dimethylallyltransferase of Roseobacter denitrificans (strain ATCC 33942 / OCh 114) (Erythrobacter sp. (strain OCh 114)).